The following is a 787-amino-acid chain: Glutamine-dependent NAD(+) synthetase (787 aa).

A CN hydrolase domain is found at 5–275 (VTVAVSTLNQ…VEVTLATIDL (271 aa)). Residue glutamate 45 is the Proton acceptor; for glutaminase activity of the active site. Residue lysine 114 is the For glutaminase activity of the active site. The Nucleophile; for glutaminase activity role is filled by cysteine 175. Positions 325-787 (MHTPEEEIAL…KIKDRTGIPV (463 aa)) are ligase. 355 to 362 (PLSGGVDS) contributes to the ATP binding site. Serine 357 is a catalytic residue. At serine 703 the chain carries Phosphoserine.

In the C-terminal section; belongs to the NAD synthetase family.

It carries out the reaction deamido-NAD(+) + L-glutamine + ATP + H2O = L-glutamate + AMP + diphosphate + NAD(+) + H(+). The protein operates within cofactor biosynthesis; NAD(+) biosynthesis; NAD(+) from deamido-NAD(+) (L-Gln route): step 1/1. Its function is as follows. Catalyzes the ATP-dependent amidation of deamido-NAD to form NAD. Uses L-glutamine as a nitrogen source. Because of its role in energy metabolism, involved in the modulation of aged-related cardiac function, mobility, and lifespan. The chain is Glutamine-dependent NAD(+) synthetase from Drosophila melanogaster (Fruit fly).